The primary structure comprises 123 residues: Small ribosomal subunit protein uS12c (123 aa).

The segment covering 1–16 has biased composition (polar residues); that stretch reads MPTIQQLIRNSRQPAE. Positions 1 to 23 are disordered; the sequence is MPTIQQLIRNSRQPAENRTKSPA.

It belongs to the universal ribosomal protein uS12 family. As to quaternary structure, part of the 30S ribosomal subunit.

Its subcellular location is the plastid. The protein resides in the chloroplast. Its function is as follows. With S4 and S5 plays an important role in translational accuracy. Located at the interface of the 30S and 50S subunits. The chain is Small ribosomal subunit protein uS12c (rps12) from Staurastrum punctulatum (Green alga).